The chain runs to 175 residues: Regenerating islet-derived protein 3-beta (175 aa).

The N-terminal stretch at 1-26 (MLPPTACSVMSWMLLSCLMLLSQVQG) is a signal peptide. Residues 27 to 37 (EDSLKNIPSAR) constitute a propeptide that is removed on maturation. Disulfide bonds link Cys-40–Cys-51, Cys-68–Cys-171, and Cys-146–Cys-163. Positions 47–172 (YGSYCYALFQ…CEVKLPYVCK (126 aa)) constitute a C-type lectin domain. His-107 is a Zn(2+) binding site. An EPN motif is present at residues 114–116 (EPN). Glu-121 contributes to the Zn(2+) binding site.

Forms a hexameric membrane-permeabilizing oligomeric pore on membrane phospholipids. The hexamer is formed by three dimers related by helical symmetry. Forms filaments, filamentation traps pore complexes and limits damage to host cells. Interacts with EXTL3. Proteolytic processing by trypsin removes an inhibitory N-terminal propeptide and is essential for peptidoglycan binding and antibacterial activity. In terms of tissue distribution, constitutively expressed in the small intestine, moderately in colon and at an extremely low level in healthy pancreas.

Its subcellular location is the secreted. Lipopolysaccharide inhibits pore-forming activity, explaining why is bactericidal for Gram-positive but not Gram-negative bacteria. Bactericidal C-type lectin which acts against several intestinal Gram-positive and Gram-negative bacteria. Lacks antibacterial activity against S.typhimurium. May play a role in protection against infection with S.enteritidis by inhibiting its translocation from the gut lumen into intestinal tissues and further extraintestinal tissues. Its function is as follows. Acts as a hormone in response to different stimuli. Secreted by different cell types to activate its receptor EXTL3 and induce cell specific signaling pathways. In pancreas, is able stimulate cell proliferation. This Mus musculus (Mouse) protein is Regenerating islet-derived protein 3-beta.